The following is a 107-amino-acid chain: U-scoloptoxin(19)-Sm1a (107 aa).

The first 20 residues, 1 to 20 (MRFLVSVAFLLTVSSLLVSG), serve as a signal peptide directing secretion.

This sequence belongs to the scoloptoxin-19 family. Contains 6 disulfide bonds. In terms of tissue distribution, expressed by the venom gland.

Its subcellular location is the secreted. In Scolopendra morsitans (Tanzanian blue ringleg centipede), this protein is U-scoloptoxin(19)-Sm1a.